A 422-amino-acid polypeptide reads, in one-letter code: Pre-B-cell leukemia transcription factor 2 (422 aa).

The interval 1-43 (MDEQGRLMQARGVGIPGHPIHGGPQTLTPHPMHEPPADNGEPR) is disordered. Residues 31-43 (PMHEPPADNGEPR) are compositionally biased toward basic and acidic residues. A PBC domain is found at 42-236 (PRKQDIGDIL…VMILRSRFLD (195 aa)). The segment at 49 to 128 (DILQQIMTIT…EGVAGPEKGG (80 aa)) is PBC-A. The tract at residues 131 to 236 (AAAAAAAAAS…VMILRSRFLD (106 aa)) is PBC-B. The segment at residues 237-299 (ARRKRRNFSK…NKRIRYKKNI (63 aa)) is a DNA-binding region (homeobox). Disordered stretches follow at residues 319 to 341 (QGGH…GSFN) and 353 to 422 (QGLN…DTSN). A compositionally biased stretch (polar residues) spans 401 to 410 (VTPSSVTSPT).

It belongs to the TALE/PBX homeobox family.

The protein localises to the nucleus. Transcriptional activator that binds the sequence 5'-ATCAATCAA-3'. This chain is Pre-B-cell leukemia transcription factor 2, found in Xenopus tropicalis (Western clawed frog).